The chain runs to 618 residues: MSPSNKGTVLALILALTMVVVNGFSSRFFVEKSSLTVLNSWEMGAKHDAAIANFGLPKYGGFMIGSVVYAGQDAYGCNSFNKTFNTKSPYPKILLIDRGVCNFALKIWNGQQSGAAAVLLADNIVEPLITMDTPQDEDPDFIDKVKIPSALILRSFGDSLKKALKRGEEVILKMDWSESIPNPDERVEYELWANTNDECGVHCDKQIDFIKNFKGMAQILEKGGYTLFRPHYISWVCPKELLLSKQCRTQCINQGRYCALDTKQEFEDGYNGKDVVYENLRQLCVHKVAKEKNTSWVWWDYVTDFNIRCSMKEKKYSRECAETIVESLGLSLEKIKKCIGDPDADVENEVLKAEEAFQLGQENRGIVTIFPTLMINNAQYRGKLERTAVLKAICSGFKERTEPSICLNSDIETNECLIENGGCWQDKRSNVTACKDTFRGRVCECPVVDGVQYKGDGYTSCKPYGPARCSMNNGDCWSETRKGLTFSSCSDSETSGCRCPLGFLGDGLKCEDIDECKEKSACKCDGCKCKNNWGGYECKCSNNSIYMKEEDTCIERRSGSRSRGLFTIVVLTAIAGISLGAYIFYKYHLQSYMDSEIVSIMSQYIPLDSQSINQDSFK.

The first 23 residues, 1–23 (MSPSNKGTVLALILALTMVVVNG), serve as a signal peptide directing secretion. Residues 24 to 563 (FSSRFFVEKS…IERRSGSRSR (540 aa)) are Lumenal-facing. Residues 58–164 (KYGGFMIGSV…SFGDSLKKAL (107 aa)) form the PA domain. Asn-81, Asn-293, and Asn-430 each carry an N-linked (GlcNAc...) asparagine glycan. EGF-like domains lie at 412–462 (ETNE…TSCK) and 465–511 (GPAR…LKCE). 7 disulfides stabilise this stretch: Cys-416-Cys-434, Cys-423-Cys-443, Cys-445-Cys-461, Cys-469-Cys-489, Cys-476-Cys-497, Cys-499-Cys-510, and Cys-540-Cys-553. Residues 512 to 554 (DIDECKEKSACKCDGCKCKNNWGGYECKCSNNSIYMKEEDTCI) form the EGF-like 3; calcium-binding domain. N-linked (GlcNAc...) asparagine glycosylation is present at Asn-542. The chain crosses the membrane as a helical span at residues 564–584 (GLFTIVVLTAIAGISLGAYIF). Residues 585 to 618 (YKYHLQSYMDSEIVSIMSQYIPLDSQSINQDSFK) lie on the Cytoplasmic side of the membrane. Residues 604–607 (YIPL) carry the Tyrosine-based internalization motif motif.

This sequence belongs to the VSR (BP-80) family. In terms of tissue distribution, expressed in seedlings, roots, leaves, flowers and siliques.

The protein resides in the membrane. It localises to the golgi apparatus membrane. The protein localises to the cytoplasmic vesicle. It is found in the clathrin-coated vesicle membrane. Its subcellular location is the prevacuolar compartment membrane. Vacuolar-sorting receptor (VSR) involved in clathrin-coated vesicles sorting from Golgi apparatus to vacuoles. This Arabidopsis thaliana (Mouse-ear cress) protein is Vacuolar-sorting receptor 5 (VSR5).